The sequence spans 234 residues: Glucosamine-6-phosphate deaminase (234 aa).

The active-site Proton acceptor; for enolization step is Asp-62. Asn-128 functions as the For ring-opening step in the catalytic mechanism. His-130 serves as the catalytic Proton acceptor; for ring-opening step. The For ring-opening step role is filled by Glu-135.

The protein belongs to the glucosamine/galactosamine-6-phosphate isomerase family. NagB subfamily.

The catalysed reaction is alpha-D-glucosamine 6-phosphate + H2O = beta-D-fructose 6-phosphate + NH4(+). It functions in the pathway amino-sugar metabolism; N-acetylneuraminate degradation; D-fructose 6-phosphate from N-acetylneuraminate: step 5/5. Functionally, catalyzes the reversible isomerization-deamination of glucosamine 6-phosphate (GlcN6P) to form fructose 6-phosphate (Fru6P) and ammonium ion. This Streptococcus pyogenes serotype M1 protein is Glucosamine-6-phosphate deaminase.